A 414-amino-acid chain; its full sequence is Alanine--glyoxylate aminotransferase (414 aa).

A mitochondrion-targeting transit peptide spans 1 to 23 (MFRMLAKASVTLGSRAAGWVRTM). An N6-(pyridoxal phosphate)lysine modification is found at Lys231. N6-acetyllysine; alternate is present on Lys247. Lys247 is subject to N6-succinyllysine; alternate. Residue Lys256 is modified to N6-acetyllysine. Lys330 bears the N6-acetyllysine; alternate mark. Residue Lys330 is modified to N6-succinyllysine; alternate. Lys334 is modified (N6-acetyllysine). Position 382 (Arg382) interacts with substrate. A Microbody targeting signal motif is present at residues 412-414 (NKL).

The protein belongs to the class-V pyridoxal-phosphate-dependent aminotransferase family. In terms of assembly, homodimer. Requires pyridoxal 5'-phosphate as cofactor.

It is found in the peroxisome. Its subcellular location is the mitochondrion matrix. The catalysed reaction is L-serine + pyruvate = 3-hydroxypyruvate + L-alanine. It catalyses the reaction glyoxylate + L-alanine = glycine + pyruvate. Functionally, catalyzes the transamination of glyoxylate to glycine and contributes to the glyoxylate detoxification. Catalyzes the transamination between L-serine and pyruvate and weakly contributes to gluconeogenesis from the L-serine metabolism. This is Alanine--glyoxylate aminotransferase from Mus musculus (Mouse).